Reading from the N-terminus, the 299-residue chain is MTSSSAPVLPQNILSIQSWVSYGHVGNAAALFPLQRLGFEVWTINTVQFSNHTGYGEWTGSVFPPELVADLLNGIAARGVLPTCAAVLSGYMGSEGTVSAVVEAVRRVREANPAALYCCDPVMGDVGRGVFVRPELPDLIRTQAVPEADIVTPNQFELELLTGRRVTRLQEALDASRMLRGTLREGGPRLVVVTSLVREDAPQGVIETLAVTGEGAWLCRTPLLPLDPPRNGTGDAIAALFLGHYLRTQDAGTALSLSMSALFAVLDLTHRVGTREIQLVAAQDEYTRPSRVFEAERVA.

S18 provides a ligand contact to substrate. 2 residues coordinate ATP: D120 and E157. Substrate is bound at residue D235.

It belongs to the pyridoxine kinase family. PdxY subfamily. As to quaternary structure, homodimer. Mg(2+) serves as cofactor.

The enzyme catalyses pyridoxal + ATP = pyridoxal 5'-phosphate + ADP + H(+). The protein operates within cofactor metabolism; pyridoxal 5'-phosphate salvage; pyridoxal 5'-phosphate from pyridoxal: step 1/1. Functionally, pyridoxal kinase involved in the salvage pathway of pyridoxal 5'-phosphate (PLP). Catalyzes the phosphorylation of pyridoxal to PLP. The polypeptide is Pyridoxal kinase PdxY (Deinococcus geothermalis (strain DSM 11300 / CIP 105573 / AG-3a)).